We begin with the raw amino-acid sequence, 1216 residues long: Coatomer subunit alpha-1 (1216 aa).

8 WD repeats span residues 7–48, 49–88, 91–132, 133–172, 202–241, 246–285, 288–326, and 363–404; these read TKSN…DRFD, EHEG…CLFT, GHLD…SVLT, GHNH…KKTV, GHDR…AWEV, GHMN…GLQT, REHD…PAFA, and SLNQ…VGRS.

Oligomeric complex that consists of at least the alpha, beta, beta', gamma, delta, epsilon and zeta subunits.

The protein resides in the cytoplasm. It is found in the golgi apparatus membrane. It localises to the cytoplasmic vesicle. Its subcellular location is the COPI-coated vesicle membrane. In terms of biological role, the coatomer is a cytosolic protein complex that binds to dilysine motifs and reversibly associates with Golgi non-clathrin-coated vesicles, which further mediate biosynthetic protein transport from the ER, via the Golgi up to the trans Golgi network. Coatomer complex is required for budding from Golgi membranes, and is essential for the retrograde Golgi-to-ER transport of dilysine-tagged proteins. In Arabidopsis thaliana (Mouse-ear cress), this protein is Coatomer subunit alpha-1.